Consider the following 94-residue polypeptide: Mitochondrial import receptor subunit TOM9-1 (94 aa).

At 1–48 the chain is on the cytoplasmic side; that stretch reads MAPKKIGAGKGDSSILAKISNYDIVSQGRRAACDAVYVSKKLLKSTGK. The chain crosses the membrane as a helical span at residues 49–66; it reads AAWIAGTTFLILAVPLIL. The Mitochondrial intermembrane segment spans residues 67-94; it reads ELEQDHRLGEIDFEQASLLGTPPVGAML.

It belongs to the Tom22 family. Forms part of the preprotein translocase complex of the outer mitochondrial membrane (TOM complex) which consists of at least 6 different proteins (TOM5, TOM6, TOM7, TOM20, TOM22/TOM9 and TOM40). Expressed in roots, flowers, young cotyledons and leaves.

The protein resides in the mitochondrion outer membrane. Central component of the receptor complex responsible for the recognition and translocation of cytosolically synthesized mitochondrial preproteins. Together with TOM20 functions as the transit peptide receptor at the surface of the mitochondrion outer membrane and facilitates the movement of preproteins into the translocation pore. This chain is Mitochondrial import receptor subunit TOM9-1 (TOM9-1), found in Arabidopsis thaliana (Mouse-ear cress).